We begin with the raw amino-acid sequence, 439 residues long: ATP-dependent protease ATPase subunit HslU (439 aa).

ATP contacts are provided by residues isoleucine 17, 59 to 64 (GVGKTE), aspartate 251, glutamate 317, and arginine 389.

The protein belongs to the ClpX chaperone family. HslU subfamily. A double ring-shaped homohexamer of HslV is capped on each side by a ring-shaped HslU homohexamer. The assembly of the HslU/HslV complex is dependent on binding of ATP.

The protein resides in the cytoplasm. In terms of biological role, ATPase subunit of a proteasome-like degradation complex; this subunit has chaperone activity. The binding of ATP and its subsequent hydrolysis by HslU are essential for unfolding of protein substrates subsequently hydrolyzed by HslV. HslU recognizes the N-terminal part of its protein substrates and unfolds these before they are guided to HslV for hydrolysis. The chain is ATP-dependent protease ATPase subunit HslU from Campylobacter jejuni subsp. jejuni serotype O:2 (strain ATCC 700819 / NCTC 11168).